A 119-amino-acid chain; its full sequence is MKVGTDIIQIDRIEKLIDRYGDTFKQRYLSKEEIAAAKKVETLAGYWAAKEAIAKAFGCGIGAQLAFHDIMIAKDSRGAPYFTLSDEALKTYTIHSASISISHDGGFAIAVAAIDFEAA.

The Mg(2+) site is built by aspartate 6 and glutamate 51.

Belongs to the P-Pant transferase superfamily. AcpS family. The cofactor is Mg(2+).

It localises to the cytoplasm. It carries out the reaction apo-[ACP] + CoA = holo-[ACP] + adenosine 3',5'-bisphosphate + H(+). Functionally, transfers the 4'-phosphopantetheine moiety from coenzyme A to a Ser of acyl-carrier-protein. The sequence is that of Holo-[acyl-carrier-protein] synthase from Sulfurovum sp. (strain NBC37-1).